A 410-amino-acid polypeptide reads, in one-letter code: Argininosuccinate synthase (410 aa).

ATP is bound by residues 10-18 (AYSGGLDTS) and A37. L-citrulline-binding residues include Y90 and S95. G120 contacts ATP. Residues T122, N126, and D127 each contribute to the L-aspartate site. N126 is an L-citrulline binding site. Positions 130, 182, 191, 267, and 279 each coordinate L-citrulline.

It belongs to the argininosuccinate synthase family. Type 1 subfamily. In terms of assembly, homotetramer.

The protein localises to the cytoplasm. The enzyme catalyses L-citrulline + L-aspartate + ATP = 2-(N(omega)-L-arginino)succinate + AMP + diphosphate + H(+). It participates in amino-acid biosynthesis; L-arginine biosynthesis; L-arginine from L-ornithine and carbamoyl phosphate: step 2/3. This Polynucleobacter necessarius subsp. necessarius (strain STIR1) protein is Argininosuccinate synthase.